The chain runs to 127 residues: Photosystem II reaction center Psb28 protein (127 aa).

Positions 108–127 (LGYSQSQDSDQTEGADNQQA) are disordered. A compositionally biased stretch (polar residues) spans 109–127 (GYSQSQDSDQTEGADNQQA).

It belongs to the Psb28 family. In terms of assembly, part of the photosystem II complex.

Its subcellular location is the cellular thylakoid membrane. The protein is Photosystem II reaction center Psb28 protein of Synechococcus sp. (strain CC9605).